The following is a 358-amino-acid chain: Trace amine-associated receptor 7a (358 aa).

Topologically, residues 1-47 (MDKLVDHFLSDQSRTMNEDLFSATSTELCYENLNRSCVRSPYSPGPR) are extracellular. Residue Asn34 is glycosylated (N-linked (GlcNAc...) asparagine). 2 cysteine pairs are disulfide-bonded: Cys37–Cys201 and Cys120–Cys205. Residues 48 to 68 (LILYAVFGFGAALAVCGNLLV) form a helical membrane-spanning segment. Residues 69 to 83 (MTSILHFRQLHSPAN) are Cytoplasmic-facing. A helical membrane pass occupies residues 84 to 104 (FLVASLACADFLVGLTVMPFS). At 105–121 (TVRSVEGCWYFGESYCK) the chain is on the extracellular side. A helical transmembrane segment spans residues 122 to 143 (FHSCFEGSFCYSSIFHLCFISV). The Cytoplasmic portion of the chain corresponds to 144-166 (DRYIAVSDPLTYPTRFTASVSGK). Residues 167–187 (CITFSWLLSIIYSFSLLYTGA) traverse the membrane as a helical segment. Over 188–212 (NEAGLEDLVSVLTCVGGCQIAVNQS) the chain is Extracellular. N-linked (GlcNAc...) asparagine glycosylation is present at Asn210. Residues 213-233 (WVFINFLLFLIPTLVMMTVYS) traverse the membrane as a helical segment. Topologically, residues 234–274 (KIFLIAKQQAQNIEKMSKQTARASESYKDRVAKRERKAAKT) are cytoplasmic. The chain crosses the membrane as a helical span at residues 275–295 (LGIAVAAFLLSWLPYFIDSII). The Extracellular portion of the chain corresponds to 296 to 309 (DAFLGFITPTYVYE). Residues 310-333 (ILVWIAYYNSAMNPLIYAFFYPWF) form a helical membrane-spanning segment. The Cytoplasmic portion of the chain corresponds to 334-358 (RKAIKLIVTGKILRENSSTTNLFPE).

This sequence belongs to the G-protein coupled receptor 1 family. In terms of tissue distribution, specifically expressed in neurons of the olfactory epithelium.

Its subcellular location is the cell membrane. In terms of biological role, olfactory receptor specific for N,N-dimethylalkylamines trace amines. Trace amine compounds are enriched in animal body fluids and act on trace amine-associated receptors (TAARs) to elicit both intraspecific and interspecific innate behaviors. Ligand-binding causes a conformation change that triggers signaling via G(s)-class of G alpha proteins (GNAL or GNAS). In Mus musculus (Mouse), this protein is Trace amine-associated receptor 7a.